A 129-amino-acid polypeptide reads, in one-letter code: Small ribosomal subunit protein uS11 (129 aa).

Belongs to the universal ribosomal protein uS11 family. As to quaternary structure, part of the 30S ribosomal subunit. Interacts with proteins S7 and S18. Binds to IF-3.

Located on the platform of the 30S subunit, it bridges several disparate RNA helices of the 16S rRNA. Forms part of the Shine-Dalgarno cleft in the 70S ribosome. The polypeptide is Small ribosomal subunit protein uS11 (Aromatoleum aromaticum (strain DSM 19018 / LMG 30748 / EbN1) (Azoarcus sp. (strain EbN1))).